The chain runs to 101 residues: Urease subunit beta (101 aa).

The protein belongs to the urease beta subunit family. As to quaternary structure, heterotrimer of UreA (gamma), UreB (beta) and UreC (alpha) subunits. Three heterotrimers associate to form the active enzyme.

Its subcellular location is the cytoplasm. The enzyme catalyses urea + 2 H2O + H(+) = hydrogencarbonate + 2 NH4(+). It participates in nitrogen metabolism; urea degradation; CO(2) and NH(3) from urea (urease route): step 1/1. The chain is Urease subunit beta from Stutzerimonas stutzeri (strain A1501) (Pseudomonas stutzeri).